The sequence spans 75 residues: Mu-conotoxin GIIIA (75 aa).

The N-terminal stretch at 1–20 is a signal peptide; sequence MMSKLGVLLTICLLLFPLTA. Residues 21–51 constitute a propeptide that is removed on maturation; it reads LPMDGDEPANRPVERMQDNISSEQYPLFEKR. Intrachain disulfides connect Cys-54–Cys-66, Cys-55–Cys-71, and Cys-61–Cys-72. A 4-hydroxyproline; partial mark is found at Pro-57 and Pro-58. A 4-hydroxyproline modification is found at Pro-68. Ala-73 bears the Alanine amide mark.

Belongs to the conotoxin M superfamily. In terms of processing, hydroxylated; hydroxylations improve the ability to block Nav1.4/SCN4A sodium channels but does not affect folding. In terms of tissue distribution, expressed by the venom duct.

It localises to the secreted. Its function is as follows. Mu-conotoxins block voltage-gated sodium channels (Nav). This toxin potently blocks rat Nav1.4/SCN4A (IC(50)= 19-110 nM). It also moderately blocks rNav1.1/SCN1A (Kd=260 nM), rNav1.2/SCN2A (IC(50)=2.7-17.8 uM), and mNav1.6/SCN8A (IC(50)=680 nM). The inhibition is reversible. In vivo, induces paralysis to an isolated skeletal muscle preparation from frog (cutaneous pectoralis) within a few minutes. This chain is Mu-conotoxin GIIIA, found in Conus geographus (Geography cone).